The following is a 305-amino-acid chain: Methionyl-tRNA formyltransferase (305 aa).

110–113 (SLLP) is a binding site for (6S)-5,6,7,8-tetrahydrofolate.

Belongs to the Fmt family.

The catalysed reaction is L-methionyl-tRNA(fMet) + (6R)-10-formyltetrahydrofolate = N-formyl-L-methionyl-tRNA(fMet) + (6S)-5,6,7,8-tetrahydrofolate + H(+). Functionally, attaches a formyl group to the free amino group of methionyl-tRNA(fMet). The formyl group appears to play a dual role in the initiator identity of N-formylmethionyl-tRNA by promoting its recognition by IF2 and preventing the misappropriation of this tRNA by the elongation apparatus. This is Methionyl-tRNA formyltransferase from Gluconacetobacter diazotrophicus (strain ATCC 49037 / DSM 5601 / CCUG 37298 / CIP 103539 / LMG 7603 / PAl5).